Here is a 500-residue protein sequence, read N- to C-terminus: L-arabinose isomerase (500 aa).

Residues glutamate 306, glutamate 333, histidine 350, and histidine 450 each coordinate Mn(2+).

The protein belongs to the arabinose isomerase family. In terms of assembly, homohexamer. Mn(2+) is required as a cofactor.

It carries out the reaction beta-L-arabinopyranose = L-ribulose. Its pathway is carbohydrate degradation; L-arabinose degradation via L-ribulose; D-xylulose 5-phosphate from L-arabinose (bacterial route): step 1/3. Functionally, catalyzes the conversion of L-arabinose to L-ribulose. This chain is L-arabinose isomerase, found in Shigella boydii serotype 18 (strain CDC 3083-94 / BS512).